The sequence spans 168 residues: Variant surface antigen D (168 aa).

An N-terminal signal peptide occupies residues 1-29 (MKKSIFSKKLLVSFGSLVTLAAIPLIAIS). Cysteine 30 is lipidated: N-palmitoyl cysteine. Cysteine 30 is lipidated: S-diacylglycerol cysteine. A disordered region spans residues 33–168 (TNTDQSQQPG…STSTSNMNTR (136 aa)). Low complexity-rich tracts occupy residues 35–44 (TDQSQQPGSG) and 52–71 (GTTT…ESGT). A compositionally biased stretch (gly residues) spans 72-81 (TTGGQTGTTT). 7 repeat units span residues 81–92 (TGGQSDSTSTSK), 93–104 (EQGSSDSTSTSK), 105–116 (EQGSSDSTSTSK), 117–128 (EQGSSDSTSTSK), 129–140 (EQGSSDSTSTSK), 141–152 (EQGSSDSTSTSK), and 153–164 (EQGSSDSTSTSN). Positions 81–164 (TGGQSDSTST…GSSDSTSTSN (84 aa)) are 7 X 12 AA tandem repeats. Residues 82-168 (GGQSDSTSTS…STSTSNMNTR (87 aa)) are compositionally biased toward low complexity.

The protein resides in the cell membrane. Functionally, responsible for the antigenic diversity for host adaptation. Expression in E.coli of a construct containing vlpD, vlpE, and vlpF yields antigenically distinguishable products corresponding to each gene. The polypeptide is Variant surface antigen D (vlpD) (Mesomycoplasma hyorhinis (Mycoplasma hyorhinis)).